The sequence spans 365 residues: Aminomethyltransferase (365 aa).

It belongs to the GcvT family. In terms of assembly, the glycine cleavage system is composed of four proteins: P, T, L and H.

The enzyme catalyses N(6)-[(R)-S(8)-aminomethyldihydrolipoyl]-L-lysyl-[protein] + (6S)-5,6,7,8-tetrahydrofolate = N(6)-[(R)-dihydrolipoyl]-L-lysyl-[protein] + (6R)-5,10-methylene-5,6,7,8-tetrahydrofolate + NH4(+). The glycine cleavage system catalyzes the degradation of glycine. In Frankia alni (strain DSM 45986 / CECT 9034 / ACN14a), this protein is Aminomethyltransferase.